The primary structure comprises 178 residues: Caveolin-1 (178 aa).

S2 is subject to N-acetylserine. S2 is modified (phosphoserine). The tract at residues 2 to 94 (SGGKYVDSEG…WKASFTTFTV (93 aa)) is required for homooligomerization. Residues 2–104 (SGGKYVDSEG…TKYWFYRLLS (103 aa)) lie on the Cytoplasmic side of the membrane. K5 bears the N6-acetyllysine; alternate mark. K5 participates in a covalent cross-link: Glycyl lysine isopeptide (Lys-Gly) (interchain with G-Cter in ubiquitin); alternate. Y6 is modified (phosphotyrosine). Phosphoserine is present on S9. Residue Y14 is modified to Phosphotyrosine; by ABL1. Y25 is subject to Phosphotyrosine. Glycyl lysine isopeptide (Lys-Gly) (interchain with G-Cter in ubiquitin) cross-links involve residues K26 and K30. S37 carries the phosphoserine modification. Residues K39, K47, and K57 each participate in a glycyl lysine isopeptide (Lys-Gly) (interchain with G-Cter in ubiquitin) cross-link. The segment at 82–94 (DGIWKASFTTFTV) is interaction with CAVIN3. Positions 105 to 125 (ALFGIPMALIWGIYFAILSFL) form an intramembrane region, helical. Residues 126–178 (HIWAVVPCIKSFLIEIQCISRVYSIYIHTVCDPLFEAIGKIFSNVRIGLQKEI) are Cytoplasmic-facing. The tract at residues 131–142 (VPCIKSFLIEIQ) is interacts with SPRY1, SPRY2, SPRY3 and SPRY4. 3 S-palmitoyl cysteine lipidation sites follow: C133, C143, and C156. Positions 149 to 160 (SIYIHTVCDPLF) are interacts with SPRY1, SPRY2, and SPRY4. The tract at residues 167–178 (FSNVRIGLQKEI) is interacts with SPRY1, SPRY2, SPRY3 and SPRY4.

It belongs to the caveolin family. In terms of assembly, homooligomer. Interacts with GLIPR2. Interacts with NOSTRIN. Interacts with SNAP25 and STX1A. Interacts (via the N-terminus) with DPP4; the interaction is direct. Interacts with CTNNB1, CDH1 and JUP. Interacts with PACSIN2; this interaction induces membrane tubulation. Interacts with SLC7A9. Interacts with BMX and BTK. Interacts with TGFBR1. Interacts with CAVIN3 (via leucine-zipper domain) in a cholesterol-sensitive manner. Interacts with CAVIN1. Interacts with EHD2 in a cholesterol-dependent manner. Forms a ternary complex with UBXN6 and VCP; mediates CAV1 targeting to lysosomes for degradation. Interacts with ABCG1; this interaction regulates ABCG1-mediated cholesterol efflux. Interacts with NEU3; this interaction enhances NEU3 sialidase activity within caveola. Interacts (via C-terminus) with SPRY1, SPRY2 (via C-terminus), SPRY3, and SPRY4. Interacts with IGFBP5; this interaction allows trafficking of IGFBP5 from the plasma membrane to the nucleus. Post-translationally, phosphorylated at Tyr-14 by ABL1 in response to oxidative stress. In terms of processing, ubiquitinated. Undergo monoubiquitination and multi- and/or polyubiquitination. Monoubiquitination of N-terminal lysines promotes integration in a ternary complex with UBXN6 and VCP which promotes oligomeric CAV1 targeting to lysosomes for degradation. Ubiquitinated by ZNRF1; leading to degradation and modulation of the TLR4-mediated immune response.

The protein resides in the golgi apparatus membrane. It localises to the cell membrane. It is found in the membrane. Its subcellular location is the caveola. The protein localises to the membrane raft. Functionally, may act as a scaffolding protein within caveolar membranes. Forms a stable heterooligomeric complex with CAV2 that targets to lipid rafts and drives caveolae formation. Mediates the recruitment of CAVIN proteins (CAVIN1/2/3/4) to the caveolae. Interacts directly with G-protein alpha subunits and can functionally regulate their activity. Involved in the costimulatory signal essential for T-cell receptor (TCR)-mediated T-cell activation. Its binding to DPP4 induces T-cell proliferation and NF-kappa-B activation in a T-cell receptor/CD3-dependent manner. Recruits CTNNB1 to caveolar membranes and may regulate CTNNB1-mediated signaling through the Wnt pathway. Negatively regulates TGFB1-mediated activation of SMAD2/3 by mediating the internalization of TGFBR1 from membrane rafts leading to its subsequent degradation. Binds 20(S)-hydroxycholesterol (20(S)-OHC). This is Caveolin-1 (CAV1) from Saimiri boliviensis boliviensis (Bolivian squirrel monkey).